The following is a 75-amino-acid chain: Protein P8 (75 aa).

Residues 19-47 form a disordered region; the sequence is PMGGMPSIASSSSAETGQQTQSGNFTGGG. Polar residues predominate over residues 26–39; the sequence is IASSSSAETGQQTQ. Residues 55–72 traverse the membrane as a helical segment; sequence NNQLLIVGAVVIGLFLVI.

The protein localises to the virion membrane. The polypeptide is Protein P8 (VIII) (Pseudoalteromonas phage PM2 (Bacteriophage PM2)).